A 435-amino-acid chain; its full sequence is Uracil permease (435 aa).

12 helical membrane-spanning segments follow: residues 17-37 (FSWV…TILV), 42-62 (GMSP…YLLI), 67-87 (IPAY…VKAT), 91-111 (GAAM…ALLI), 122-142 (ILPP…LAST), 161-181 (LKHF…AIFL), 191-213 (LIGI…QPVL), 234-254 (VTLG…SEHI), 311-331 (VFSV…GFIG), 336-356 (LISS…FGII), 376-396 (NLII…IQVS), and 399-419 (GFQV…NLIL).

It belongs to the nucleobase:cation symporter-2 (NCS2) (TC 2.A.40) family.

Its subcellular location is the cell membrane. Transport of uracil in the cell. This is Uracil permease (pyrP) from Bacillus subtilis (strain 168).